A 445-amino-acid polypeptide reads, in one-letter code: Guanosine nucleotide diphosphate dissociation inhibitor 1 (445 aa).

Belongs to the Rab GDI family. As to quaternary structure, interacts with the GDP-bound form of RABA5C (via C-terminus). As to expression, expressed in roots, rosette leaves, stems, floral buds and siliques.

Its function is as follows. Regulates the GDP/GTP exchange reaction of most RAB proteins by inhibiting the dissociation of GDP from them, and the subsequent binding of GTP. The sequence is that of Guanosine nucleotide diphosphate dissociation inhibitor 1 (GDI1) from Arabidopsis thaliana (Mouse-ear cress).